The sequence spans 355 residues: UPF0421 protein BCE33L2478 (355 aa).

4 helical membrane-spanning segments follow: residues 19–39, 74–94, 109–129, and 131–151; these read IAVFLTVLVCEFFNIPTIFAV, FTFFLGHQALSYALAAMFTIV, TLTAVAMIPITADHYFTAFLI, and LATTSTGIIVSTVVNFFILPP.

It belongs to the UPF0421 family.

It is found in the cell membrane. In Bacillus cereus (strain ZK / E33L), this protein is UPF0421 protein BCE33L2478.